The following is a 975-amino-acid chain: 26S proteasome non-ATPase regulatory subunit 1 (975 aa).

Residues 272 to 303 (EKKSTTTTTTTPASDSMEIDIDSGNEKSGGSS) form a disordered region. PC repeat units lie at residues 393-426 (SAISSLGVINKGHIKESKSLLKTYLPGASVNQTP), 431-464 (GSLYALGLIHASHGEEIIDYLVEKLHINNAILHH), 465-499 (GASLGLGLAAMATGRDDLYEDLKSVLYNDDAVSGE), 500-534 (AAGLAMGLVMLGSGAKKAIEEMLAYAHETQHEKTI), 536-569 (SLSMGLAFLMYGKEESADTLIEQMIGDKDPLIRY), 570-605 (GGMYAIAFAYCGTGHNDALRKLLHVAVSDGTDSVRR), 606-638 (AAVTCIGFVLSRQPEKCPKAIALLAESYNPHVR), 640-674 (GAAFALGIACAGTGQRDALEILKSLTTDSVGYVKQ), 675-715 (AAWI…DSMS), and 718-748 (GAVLAFGVIDAGGRNSTIQLHSPSGHKNMNA). Disordered regions lie at residues 832-882 (SSRS…KSNP) and 922-975 (PEQL…EFTE). Basic and acidic residues-rich tracts occupy residues 842–880 (DVEKKEKEEKEAKEKEAKEKEEKEAAKAEEKEPLFERKS) and 926–935 (VVKEKPETKQ). The segment covering 944–961 (TATATASLPNATTTTSPT) has biased composition (low complexity).

The protein belongs to the proteasome subunit S1 family.

Acts as a regulatory subunit of the 26 proteasome which is involved in the ATP-dependent degradation of ubiquitinated proteins. In Dictyostelium discoideum (Social amoeba), this protein is 26S proteasome non-ATPase regulatory subunit 1 (psmD1).